Here is a 72-residue protein sequence, read N- to C-terminus: Protein kish-A (72 aa).

An N-terminal signal peptide occupies residues 1-26 (MSAIFNFQSLLIVILLLICTCAYLRS). Residues 27–53 (LVPNLLDKNKTGVLGIFWKCARIGERK) are Extracellular-facing. N35 carries an N-linked (GlcNAc...) asparagine glycan. A helical transmembrane segment spans residues 54-71 (SPYVAVCCVVMAFSILFM). Position 72 (Q72) is a topological domain, cytoplasmic.

The protein belongs to the KISH family.

The protein resides in the golgi apparatus membrane. Its function is as follows. Involved in the early part of the secretory pathway. The protein is Protein kish-A (tmem167a) of Xenopus laevis (African clawed frog).